A 335-amino-acid polypeptide reads, in one-letter code: Nucleoid-associated protein YejK (335 aa).

It belongs to the YejK family.

Its subcellular location is the cytoplasm. The protein resides in the nucleoid. This Shigella flexneri protein is Nucleoid-associated protein YejK.